Consider the following 274-residue polypeptide: Lectin-like protein (274 aa).

The signal sequence occupies residues 1-19; sequence MKIHKLCFLALLLAHTTSA. The legume-lectin like stretch occupies residues 28–268; the sequence is TSELVFLGDA…RHDIWSWTFQ (241 aa). Residues 62–81 are disordered; the sequence is SHGQSLWSTPVPFKPSSNSS. Asn-129 carries N-linked (GlcNAc...) asparagine glycosylation. Position 238 is a phosphoserine (Ser-238).

It belongs to the leguminous lectin family. In terms of tissue distribution, expressed in seedlings and leaves of adult plants.

Its subcellular location is the secreted. The protein localises to the extracellular space. It localises to the apoplast. It is found in the cell membrane. Its function is as follows. Plays a positive role in the effector-triggered immunity (ETI) response. Involved in salicylic acid (SA)-mediated processes occurring in ETI response, but is not involved in the autophagy process. Promotes systemic rather than local immunity. Essential for systemic acquired resistance (SAR), but not necessary for immune signaling downstream of SA. May act in parallel with SA. The protein is Lectin-like protein of Arabidopsis thaliana (Mouse-ear cress).